The chain runs to 103 residues: Nucleoid-associated protein Cgl0243/cg0297 (103 aa).

Belongs to the YbaB/EbfC family. Homodimer.

It localises to the cytoplasm. It is found in the nucleoid. Its function is as follows. Binds to DNA and alters its conformation. May be involved in regulation of gene expression, nucleoid organization and DNA protection. This Corynebacterium glutamicum (strain ATCC 13032 / DSM 20300 / JCM 1318 / BCRC 11384 / CCUG 27702 / LMG 3730 / NBRC 12168 / NCIMB 10025 / NRRL B-2784 / 534) protein is Nucleoid-associated protein Cgl0243/cg0297.